A 99-amino-acid chain; its full sequence is DNA-directed RNA polymerase subunit Rpo11 (99 aa).

It belongs to the archaeal Rpo11/eukaryotic RPB11/RPC19 RNA polymerase subunit family. Part of the RNA polymerase complex.

It is found in the cytoplasm. The enzyme catalyses RNA(n) + a ribonucleoside 5'-triphosphate = RNA(n+1) + diphosphate. Its function is as follows. DNA-dependent RNA polymerase (RNAP) catalyzes the transcription of DNA into RNA using the four ribonucleoside triphosphates as substrates. The sequence is that of DNA-directed RNA polymerase subunit Rpo11 from Aeropyrum pernix (strain ATCC 700893 / DSM 11879 / JCM 9820 / NBRC 100138 / K1).